We begin with the raw amino-acid sequence, 612 residues long: Autophagy-related protein 28 (612 aa).

The tract at residues 44–72 is disordered; sequence NHMEEQSPKFESSFPRRTSEGPVDDVGKS. A coiled-coil region spans residues 214–296; sequence YQAKAQDKQA…QRTLKNECFQ (83 aa).

It belongs to the ATG28 family. In terms of assembly, interacts with ATG35.

The protein localises to the cytoplasm. Its subcellular location is the vacuole membrane. It localises to the cytoplasmic vesicle membrane. In terms of biological role, required for the autophagic degradation of peroxisomes called pexophagy, but not essential for general autophagy. Involved in resistance to elevated pH. This Komagataella phaffii (strain GS115 / ATCC 20864) (Yeast) protein is Autophagy-related protein 28 (ATG28).